The chain runs to 248 residues: MYKLVLIRHGESTWNKENRFTGWVDVDLTEQGRNEAYQAGELLKEAGYTFDIAYTSVLKRAIRTLWHVQDKMDLMYLPVVHSWRLNERHYGALSGLNKAETAAKFGDEQVLVWRRSYDTPPPALEPTDERAPFNDPRYAKVPREQLPLTECLKDTVARVLPLWNESIAPAVRAGKQVLIAAHGNSLRALIKYLDGISDSDIVGLNIPNGVPLVYELDENLKPIKHYYLGDQDAIAQAQAAVAKQGKAG.

Substrate contacts are provided by residues 8–15 (RHGESTWN), 21–22 (TG), arginine 60, 87–90 (ERHY), lysine 98, 114–115 (RR), and 183–184 (GN). The active-site Tele-phosphohistidine intermediate is histidine 9. The active-site Proton donor/acceptor is glutamate 87.

The protein belongs to the phosphoglycerate mutase family. BPG-dependent PGAM subfamily. In terms of assembly, homodimer.

The catalysed reaction is (2R)-2-phosphoglycerate = (2R)-3-phosphoglycerate. Its pathway is carbohydrate degradation; glycolysis; pyruvate from D-glyceraldehyde 3-phosphate: step 3/5. Its function is as follows. Catalyzes the interconversion of 2-phosphoglycerate and 3-phosphoglycerate. The polypeptide is 2,3-bisphosphoglycerate-dependent phosphoglycerate mutase (Burkholderia orbicola (strain MC0-3)).